The chain runs to 1605 residues: MAQKPEEQLKELGSKLDLAPVSKDSLLKLLKEAAVCLSELEQSPPPAVLKSIQPFLDAVIKPEILNHQDKDVKLLVASCVSEITRITAPEAPYSDNIMKDIFQLIVSAFAGLNDVSGPSFGRRVLILETVAKYRSCVVMLDLECDDLVKEVFTTFLDVARDDHPEIVFSSMQNIMIVLLEESEDVQEHLLLILLSKLGRNRSDVRDAARRLAMKVIEHCAPKVESDIKQFLISSMSGDSRFSSSQIDYHEVIYDLYRCAPQALSGVAPYLTGELLADKLETRLKVVGLVGELFSLPGRVISEEFDSIFLEFLKRLTDRVVEVRMAILDHIKDCLLSDPLRAEASQIISALCDRLLDYDENIRKQVVAVICDVSVSALTSIPVDTMKLVAERLRDKAILVKTYTMERLTELFRVYCLRCADGKVDTGDFNWIPGKILRCLYDKDFRSDTIEYILCSSLFPSDFSVRDKVKHWIQIFSGFDKVETKAFEKILEQRQRIQQEMQRYLSIKQTQQTADAPEIQKKILFGFRVMSRAFSDPPKTEQNFLILDQLKDANIWKILTNLLDPNTSITQASRIRDDMLKILSEKHSLYDFLSTLSIKCSYLLFSKEYVKEILAEVSVRKSSKNTLGIQPCMDFLGLLACFCPSLFDGAEEELISFLKDDDEMMKEGTLKILAKAGGTIRENLIVLASSVDLLLERICVEGNRKQAKYAVHALASITKDDGLKSLSVLYKRLVDMLEDKRYQPAVLQCLGCIAQIAMPVYETRESEVVEFIRSKILKLKSETVDDKKLSWDDKSEICQLKIYGIKTLVKSYLPFKDAQLRAGVDDLLGILKNILSFGEVSEDLESSSVDKAHLRLAAAKAVLRLSRHWDDKIPIEIFHLTLKTPEIPFPTAKKIFLGKVHQYVKDRVLEMKYACSFLFDITGSNVLESEEDKHNLADIIQHSYQTKVRKISAQTDANSVTLYPHHILPYLVHALAHHSCPDVEKCKDVKEYEMIYRQLYLIISMLLHKEEDGKTEDIDKEREYVPTIILIFHSIKQSEDVTDATKSKNSHAICELGLSIINHLTQKEPDLQGEITPVSLPPTLYKPSEKVEGDKSQVGEEKLWLADETVLLHFRALKLESHADASVIPQTSENEVMIDGESDGNEIPLGKIVERLRAQGTKTRKGKKNKSVPAEDENGKNDVDVLKMVREINLDHLQMLDKFESSNGHKHSPSERAEICQRDQKGNKRNVGDATSVVSVPKRRRSSSGHSPYKFSNSGPKVQLKASEDELHLESDMDKNVSLDSHDENSDQEKMLESISPRKRKKSLSSKLKITESDWALTDVERSRSAGGGDSKLKSASGSMKKRKNVSGLAKCSTKENKLVNDELIGCRIEVWWPMDKRFYEGTVKSYDSTKQRHVILYEDGDVEVLNLKKEQWELIDTGGKTAKKSRTSKGNSKKKRSSGSKPKNPDGVQRDEDPVTTTPKGKRTPKKNLKQLHPKDTPKSLSLEHEKVESRNKKRRSSALPKTEYSGEAGEEKSESEGKSLKEGEDDEEVVNKEEDLQEAKTESSGDAEGKEAEHDDSDTEGKQENNEMEREAEENAETSDNETLGAWKSKVGKSISRTAI.

HEAT repeat units follow at residues K50–P89, N96–C136, D146–E183, D184–P221, Q261–R298, E302–L339, A341–T378, I380–L416, A552–F591, S644–E681, K723–P758, A821–A860, L961–L1000, and H1050–E1088. 2 disordered regions span residues L1155 to V1182 and E1203 to Q1262. Residues S1211–G1225 show a composition bias toward basic and acidic residues. Positions N1226–A1233 match the Nuclear localization signal 1 motif. S1274 is modified (phosphoserine). Basic and acidic residues predominate over residues N1279–L1295. Disordered regions lie at residues N1279–L1307, E1324–A1353, and G1423–I1605. S1299 carries the phosphoserine modification. Composition is skewed to basic residues over residues T1425 to S1442 and K1464 to L1476. Positions A1426 to K1433 match the Nuclear localization signal 2 motif. 3 stretches are compositionally biased toward basic and acidic residues: residues H1477 to R1495, G1514 to E1527, and V1534 to E1574. S1524, S1562, and S1584 each carry phosphoserine. The segment covering R1575–D1585 has biased composition (acidic residues). T1588 is subject to Phosphothreonine.

It belongs to the PDS5 family. In terms of assembly, interacts with the cohesin complex. Interacts with DEK3.

The protein resides in the nucleus. Its function is as follows. Cohesin cofactor dispensable during the meiotic division but playing an important role in DNA repair by homologous recombination (HR) probably by helping SMC5/SMC6 complex. Regulator of sister chromatid cohesion in mitosis which may stabilize cohesin complex association with chromatin. May couple sister chromatid cohesion during mitosis to DNA replication. Cohesion ensures that chromosome partitioning is accurate in both meiotic and mitotic cells and plays an important role in DNA repair. This Arabidopsis thaliana (Mouse-ear cress) protein is Sister chromatid cohesion protein PDS5 homolog A.